The chain runs to 182 residues: MNKLSTKLVVAIGIGAALYGILGLWGFSIAPNTFIKPALAILTVFGALFGPVAGLLIGLIGHTVTDTIAGWGIWWGWVISSGIIGFAMGFIQKRVGFSVKNGTYNKGDISYLAITGLIGIVIAIIFAGAFDIIVMGEPFDKIVIQVLGATIADVIVFLVLGLPITIGLAKSNKKHTHLKIEK.

The next 5 membrane-spanning stretches (helical) occupy residues 9–29 (VVAI…GFSI), 40–60 (AILT…IGLI), 71–91 (WGIW…MGFI), 114–134 (ITGL…DIIV), and 142–162 (IVIQ…VLGL).

Belongs to the UPF0397 family.

It localises to the cell membrane. In Bacillus cereus (strain AH187), this protein is UPF0397 protein BCAH187_A2708.